Here is a 379-residue protein sequence, read N- to C-terminus: MNVFWFLPTHGDGHYLGTTKGARPVTLNYLKQVAQAADDLGYYGVLIPTGRSCEDSWVIASALVPLTERLRYLVAIRPGIISPTVSARMAATLDRLSGGRLLINVVTGGDPDENRGDGSFLDHSERYEVTDEFLKIWRRVLQGEAVDFEGKHLRVQNAKALYPPIQQPYPPLYFGGSSDAAHDLAADQVDVYLTWGEPPAAVAQKLADVRERAARKGRTVKFGIRLHVIVRETSEEAWKAASTLIEHISDDTIAAAQKSFSRFDSEGQRRMAALHDGRRDNLEIAPNLWAGVGLVRGGAGTALVGNPEEVAARIKEYADLGIESFIFSGYPHLEEAYRFAELVFPLLPEPYASLAGRGITNLTGPFGEMIANDLPPQAK.

Belongs to the SsuD family.

The enzyme catalyses an alkanesulfonate + FMNH2 + O2 = an aldehyde + FMN + sulfite + H2O + 2 H(+). Its function is as follows. Catalyzes the desulfonation of aliphatic sulfonates. The chain is Alkanesulfonate monooxygenase from Pseudomonas syringae pv. syringae (strain B728a).